Consider the following 290-residue polypeptide: Porphobilinogen deaminase (290 aa).

C237 is modified (S-(dipyrrolylmethanemethyl)cysteine).

The protein belongs to the HMBS family. As to quaternary structure, monomer. It depends on dipyrromethane as a cofactor.

The catalysed reaction is 4 porphobilinogen + H2O = hydroxymethylbilane + 4 NH4(+). It functions in the pathway porphyrin-containing compound metabolism; protoporphyrin-IX biosynthesis; coproporphyrinogen-III from 5-aminolevulinate: step 2/4. Its function is as follows. Tetrapolymerization of the monopyrrole PBG into the hydroxymethylbilane pre-uroporphyrinogen in several discrete steps. In Clostridium kluyveri (strain NBRC 12016), this protein is Porphobilinogen deaminase.